The sequence spans 217 residues: Probable transaldolase (217 aa).

Residue Lys-83 is the Schiff-base intermediate with substrate of the active site.

It belongs to the transaldolase family. Type 3B subfamily.

Its subcellular location is the cytoplasm. It carries out the reaction D-sedoheptulose 7-phosphate + D-glyceraldehyde 3-phosphate = D-erythrose 4-phosphate + beta-D-fructose 6-phosphate. Its pathway is carbohydrate degradation; pentose phosphate pathway; D-glyceraldehyde 3-phosphate and beta-D-fructose 6-phosphate from D-ribose 5-phosphate and D-xylulose 5-phosphate (non-oxidative stage): step 2/3. Transaldolase is important for the balance of metabolites in the pentose-phosphate pathway. The chain is Probable transaldolase from Phenylobacterium zucineum (strain HLK1).